The following is a 940-amino-acid chain: Isoleucine--tRNA ligase (940 aa).

A 'HIGH' region motif is present at residues 58 to 68 (PYANGSIHIGH). Residue E564 participates in L-isoleucyl-5'-AMP binding. A 'KMSKS' region motif is present at residues 605–609 (KMSKS). K608 serves as a coordination point for ATP. Zn(2+) is bound by residues C903, C906, C923, and C926.

Belongs to the class-I aminoacyl-tRNA synthetase family. IleS type 1 subfamily. In terms of assembly, monomer. Requires Zn(2+) as cofactor.

The protein resides in the cytoplasm. The catalysed reaction is tRNA(Ile) + L-isoleucine + ATP = L-isoleucyl-tRNA(Ile) + AMP + diphosphate. Its function is as follows. Catalyzes the attachment of isoleucine to tRNA(Ile). As IleRS can inadvertently accommodate and process structurally similar amino acids such as valine, to avoid such errors it has two additional distinct tRNA(Ile)-dependent editing activities. One activity is designated as 'pretransfer' editing and involves the hydrolysis of activated Val-AMP. The other activity is designated 'posttransfer' editing and involves deacylation of mischarged Val-tRNA(Ile). This Shewanella amazonensis (strain ATCC BAA-1098 / SB2B) protein is Isoleucine--tRNA ligase.